The following is a 30-amino-acid chain: NVDFNSESTRRKKKQKEIVDLHNXLRRXVD.

This sequence belongs to the CRISP family. Post-translationally, contains 8 disulfide bonds. As to expression, expressed by the venom gland.

The protein resides in the secreted. Inhibits calcium-activated potassium channels (KCa), voltage-gated potassium channel (Kv), and the calcium release channel/ryanodine receptor (RyR). The polypeptide is Cysteine-rich venom protein annuliferin-a (Naja annulifera (Banded Egyptian cobra)).